The chain runs to 251 residues: Prolactin-7B1 (251 aa).

Residues 1–29 (MNTSLTQLCFWALQILLMSNLLLWEDVVS) form the signal peptide. N-linked (GlcNAc...) asparagine glycans are attached at residues Asn2 and Asn73. 2 disulfide bridges follow: Cys100-Cys216 and Cys233-Cys241.

It belongs to the somatotropin/prolactin family. Expression restricted to placenta. Abundantly expressed in trophoblast cells of the junctional zone and trophoblasts migrating into the mesometrial decidua.

It localises to the secreted. The sequence is that of Prolactin-7B1 (Prl7b1) from Mus musculus (Mouse).